A 397-amino-acid chain; its full sequence is Mannonate dehydratase (397 aa).

The protein belongs to the mannonate dehydratase family. It depends on Fe(2+) as a cofactor. The cofactor is Mn(2+).

The catalysed reaction is D-mannonate = 2-dehydro-3-deoxy-D-gluconate + H2O. It participates in carbohydrate metabolism; pentose and glucuronate interconversion. Catalyzes the dehydration of D-mannonate. The polypeptide is Mannonate dehydratase (Saccharophagus degradans (strain 2-40 / ATCC 43961 / DSM 17024)).